The sequence spans 244 residues: CTD nuclear envelope phosphatase 1 (244 aa).

Residues 7–29 (LLGLRGFVAFAAKLWSFVLYLLR) form a helical membrane-spanning segment. Residues 57–224 (SQVKRKVLVL…LNLLPMLDAL (168 aa)) enclose the FCP1 homology domain.

Belongs to the dullard family. As to quaternary structure, interacts with bmpr1a, bmpr1b and bmpr2.

Its subcellular location is the membrane. The protein localises to the cytoplasm. It is found in the perinuclear region. The catalysed reaction is O-phospho-L-seryl-[protein] + H2O = L-seryl-[protein] + phosphate. The enzyme catalyses O-phospho-L-threonyl-[protein] + H2O = L-threonyl-[protein] + phosphate. Its function is as follows. Serine/threonine protein phosphatase that may dephosphorylate and activate lipins. Lipins are phosphatidate phosphatases that catalyze the conversion of phosphatidic acid to diacylglycerol and control the metabolism of fatty acids at different levels. May indirectly modulate the lipid composition of nuclear and/or endoplasmic reticulum membranes and be required for proper nuclear membrane morphology and/or dynamics. May also indirectly regulate the production of lipid droplets and triacylglycerol. Induces neuronal differentiation by antagonizing BMP signaling. Acts both by dephosphorylating BMPR1A and by promoting BMPR2 proteasomal degradation. This is CTD nuclear envelope phosphatase 1 (ctdnep1) from Xenopus tropicalis (Western clawed frog).